A 261-amino-acid chain; its full sequence is Putative carbamate hydrolase RutD (261 aa).

Positions Pro-14 to Pro-119 constitute an AB hydrolase-1 domain.

The protein belongs to the AB hydrolase superfamily. Hydrolase RutD family.

The catalysed reaction is carbamate + 2 H(+) = NH4(+) + CO2. In terms of biological role, involved in pyrimidine catabolism. May facilitate the hydrolysis of carbamate, a reaction that can also occur spontaneously. In Agrobacterium fabrum (strain C58 / ATCC 33970) (Agrobacterium tumefaciens (strain C58)), this protein is Putative carbamate hydrolase RutD.